The chain runs to 161 residues: Nucleotide-binding protein PBPRA2024 (161 aa).

It belongs to the YajQ family.

In terms of biological role, nucleotide-binding protein. This is Nucleotide-binding protein PBPRA2024 from Photobacterium profundum (strain SS9).